The sequence spans 285 residues: AT-hook motif nuclear-localized protein 21 (285 aa).

The tract at residues 17–95 is disordered; sequence DGGGGGQFTT…GSKNKPKPPV (79 aa). Positions 39–50 are enriched in basic residues; sequence NHHHHHHNHNHH. Residues 63 to 73 are compositionally biased toward gly residues; that stretch reads GLGGGGGGGSG. The a.T hook DNA-binding region spans 78-90; it reads RRPRGRPAGSKNK. A PPC domain is found at 102–238; that stretch reads ANTLRAHILE…EHEEHLQSGG (137 aa).

As to expression, preferentially expressed in roots, but also in flowers and leaves. Detected in the inflorescence meristem, floral primordia and developing reproductive organs.

It is found in the nucleus. The protein localises to the nucleoplasm. Its function is as follows. Transcription factor that specifically binds AT-rich DNA sequences related to the nuclear matrix attachment regions (MARs). Binds to the MARs present in the ETTIN (ETT) promoter leading to a negative regulation of its gene expression. Functions as a molecular node downstream of the homeotic protein AGAMOUS (AG), regulating patterning and differentiation of reproductive organs. Acts as a chromatin remodeling factor that modifies the architecture of ETTIN (ETT) chromatin by modulating H3 methylation leading to the regulation of ETT expression. Seems to be involved in the regulation of a set of reproductives genes including CRABS CLAW (CRC), JAGGED (JAG) and KNUCKLES (KNU). The sequence is that of AT-hook motif nuclear-localized protein 21 from Arabidopsis thaliana (Mouse-ear cress).